The sequence spans 457 residues: UDP-N-acetylmuramate--L-alanine ligase (457 aa).

ATP is bound at residue 109 to 115; the sequence is GTDGKTT.

Belongs to the MurCDEF family.

It localises to the cytoplasm. It catalyses the reaction UDP-N-acetyl-alpha-D-muramate + L-alanine + ATP = UDP-N-acetyl-alpha-D-muramoyl-L-alanine + ADP + phosphate + H(+). It functions in the pathway cell wall biogenesis; peptidoglycan biosynthesis. Functionally, cell wall formation. The polypeptide is UDP-N-acetylmuramate--L-alanine ligase (Thermotoga petrophila (strain ATCC BAA-488 / DSM 13995 / JCM 10881 / RKU-1)).